A 408-amino-acid chain; its full sequence is S100P-binding protein (408 aa).

Disordered regions lie at residues 1 to 111 (MMCS…AETP), 162 to 234 (KDET…SENP), and 271 to 291 (VSTS…MKGH). Acidic residues predominate over residues 28–59 (SLDEDGLDDSLLELSEGEEDDGDVNYTEEEID). 2 stretches are compositionally biased toward basic and acidic residues: residues 77–86 (DGGHVEKGER) and 162–185 (KDET…REDG). Residue Ser187 is modified to Phosphoserine. A compositionally biased stretch (polar residues) spans 188–234 (PNESKLCTESEGISPNNSAWNGPQLSSSNNNFQQTVSDKNMPDSENP). Residues 280 to 291 (VLNKDSGKMKGH) are compositionally biased toward basic and acidic residues.

As to quaternary structure, interacts with S100P. As to expression, expressed in brain, spleen, and lung. Not detected in pancreas or liver. In pancreas, expressed predominantly in islet cells and to a lesser extent in acinar cells, but not expressed in ductal cells. Up-regulated in various pancreatic ductal adenocarcinomas and pancreatic intraepithelial neoplasias. Detected in pancreatic ductal adenocarcinoma cells (at protein level). Not detected in non-neoplastic ductal epithelium (at protein level).

Its subcellular location is the nucleus. The protein is S100P-binding protein of Homo sapiens (Human).